The chain runs to 32 residues: Cytochrome b6-f complex subunit 7 (32 aa).

The helical transmembrane segment at 9–27 (AAVFWVLIPVGLLGGAILL) threads the bilayer.

It belongs to the PetM family. The 4 large subunits of the cytochrome b6-f complex are cytochrome b6, subunit IV (17 kDa polypeptide, PetD), cytochrome f and the Rieske protein, while the 4 small subunits are PetG, PetL, PetM and PetN. The complex functions as a dimer.

It localises to the cellular thylakoid membrane. Its function is as follows. Component of the cytochrome b6-f complex, which mediates electron transfer between photosystem II (PSII) and photosystem I (PSI), cyclic electron flow around PSI, and state transitions. This chain is Cytochrome b6-f complex subunit 7, found in Prochlorococcus marinus (strain MIT 9211).